Here is a 215-residue protein sequence, read N- to C-terminus: MKKIVVLLGMLLAPWFSSAVQAKGEAGEFDYYAMALSWSPEHCAIKPADRDQCSRQLGFVLHGLWPQYQRGYPSSCTRERLDPAMEQEFAGLYPSRFLYRHEWEKHGTCSGLSQHDFHQLASDLRQKREDPGRLSVSCRAAAQKPLPAQGGSGQCQRLAGPGQHHGGLRRRWRFLREVYICLNKEGTDAVTCSDEMQKRELPSCGQPDFLLRTVR.

The first 22 residues, 1–22 (MKKIVVLLGMLLAPWFSSAVQA), serve as a signal peptide directing secretion. Active-site residues include H62, E102, and H106. The interval 144-166 (KPLPAQGGSGQCQRLAGPGQHHG) is disordered.

It belongs to the RNase T2 family.

The protein resides in the periplasm. The protein localises to the cytoplasm. Its function is as follows. One of the few RNases that cleave the phosphodiester bond between any two nucleotide. Shows a preference for adenylic acid. The sequence is that of Ribonuclease from Aeromonas hydrophila.